A 191-amino-acid polypeptide reads, in one-letter code: Accessory gene regulator protein B (191 aa).

5 helical membrane-spanning segments follow: residues isoleucine 45–leucine 65, serine 81–isoleucine 101, isoleucine 108–isoleucine 128, isoleucine 144–phenylalanine 164, and asparagine 165–proline 185.

This sequence belongs to the AgrB family.

The protein resides in the cell membrane. Its function is as follows. Essential for the production of a quorum sensing system signal molecule, the autoinducing peptide (AIP). This quorum sensing system is responsible for the regulation of the expression of virulence factor genes. Involved in the proteolytic processing of AgrD, the precursor of AIP. The polypeptide is Accessory gene regulator protein B (Staphylococcus carnosus (strain TM300)).